Consider the following 1053-residue polypeptide: DIS3-like exonuclease 1 (1053 aa).

The CSD1 domain occupies 236–310; that stretch reads AGIKSGRYIQ…KSEWKGRTAA (75 aa). A disordered region spans residues 306 to 332; the sequence is GRTAALGENDSDDKASGESPSEPMPTG. In terms of domain architecture, CSD2 spans 365 to 431; that stretch reads ILVTPWDYRI…GEIATILVEN (67 aa). Residues 465–816 form the RNB domain; the sequence is RKDLRTTHLV…VHRLLMAAIS (352 aa). Serine 989 is subject to Phosphoserine.

It belongs to the RNR ribonuclease family. Component of the RNA exosome complex. The catalytically inactive RNA exosome core (Exo-9) complex is believed to associate with catalytic subunits EXOSC10, and DIS3 or DIS3L in cytoplasmic- and nuclear-specific RNA exosome complex forms. Mg(2+) serves as cofactor.

Its subcellular location is the cytoplasm. It carries out the reaction Exonucleolytic cleavage in the 3'- to 5'-direction to yield nucleoside 5'-phosphates.. In terms of biological role, catalytic component of the RNA exosome complex which has 3'-&gt;5' exoribonuclease activity and participates in a multitude of cellular RNA processing and degradation events. In the cytoplasm, the RNA exosome complex is involved in general mRNA turnover and specifically degrades inherently unstable mRNAs containing AU-rich elements (AREs) within their 3' untranslated regions, and in RNA surveillance pathways, preventing translation of aberrant mRNAs. It seems to be involved in degradation of histone mRNA. This Mus musculus (Mouse) protein is DIS3-like exonuclease 1 (Dis3l).